A 170-amino-acid polypeptide reads, in one-letter code: Putative zinc finger protein 542 (170 aa).

The KRAB domain occupies 1–42 (MLENYQNLVWLGLSISKSVISLLEKRKLPWIMAKEEIRGPLP). 2 consecutive C2H2-type zinc fingers follow at residues 98–120 (NVCK…KRNH) and 126–148 (NQCL…QRIH). Residues 154-170 (YKCNECIKTFNQRAHLT) form a C2H2-type 3; degenerate zinc finger.

Belongs to the krueppel C2H2-type zinc-finger protein family.

It is found in the nucleus. In terms of biological role, may be involved in transcriptional regulation. In Homo sapiens (Human), this protein is Putative zinc finger protein 542 (ZNF542P).